The following is a 222-amino-acid chain: Cytidylate kinase (222 aa).

Gly9–Thr17 contributes to the ATP binding site.

This sequence belongs to the cytidylate kinase family. Type 1 subfamily.

Its subcellular location is the cytoplasm. The catalysed reaction is CMP + ATP = CDP + ADP. The enzyme catalyses dCMP + ATP = dCDP + ADP. This Thermodesulfovibrio yellowstonii (strain ATCC 51303 / DSM 11347 / YP87) protein is Cytidylate kinase.